A 101-amino-acid polypeptide reads, in one-letter code: Phosphoribosyl-AMP cyclohydrolase (101 aa).

D71 serves as a coordination point for Mg(2+). A Zn(2+)-binding site is contributed by C72. D73 and D75 together coordinate Mg(2+). Zn(2+) contacts are provided by C88 and C95.

Belongs to the PRA-CH family. In terms of assembly, homodimer. Mg(2+) serves as cofactor. Requires Zn(2+) as cofactor.

Its subcellular location is the cytoplasm. The enzyme catalyses 1-(5-phospho-beta-D-ribosyl)-5'-AMP + H2O = 1-(5-phospho-beta-D-ribosyl)-5-[(5-phospho-beta-D-ribosylamino)methylideneamino]imidazole-4-carboxamide. It participates in amino-acid biosynthesis; L-histidine biosynthesis; L-histidine from 5-phospho-alpha-D-ribose 1-diphosphate: step 3/9. Catalyzes the hydrolysis of the adenine ring of phosphoribosyl-AMP. This is Phosphoribosyl-AMP cyclohydrolase from Bacillus cereus (strain ATCC 10987 / NRS 248).